The primary structure comprises 101 residues: Protein PIP-1 (101 aa).

An N-terminal signal peptide occupies residues 1-23; it reads MGKCLLLPLLLVVLSSLLGFPQA. Positions 24–101 constitute a UPAR/Ly6 domain; it reads LECFQCQRVS…CHDSPFCNKF (78 aa). Intrachain disulfides connect Cys-26–Cys-53, Cys-29–Cys-38, Cys-45–Cys-71, Cys-75–Cys-91, and Cys-92–Cys-98. N-linked (GlcNAc...) asparagine glycosylation is present at Asn-84.

The protein localises to the secreted. This is Protein PIP-1 from Sus scrofa (Pig).